The following is a 1189-amino-acid chain: Disabled homolog 2-interacting protein (1189 aa).

Positions 1 to 75 (MSAGGNARKS…EPSASTPFRV (75 aa)) are disordered. The segment covering 20–38 (LLRRPRLQRQRSRSRSRTR) has biased composition (basic residues). The span at 39–49 (PARESPQERPG) shows a compositional bias: basic and acidic residues. The segment covering 59–73 (SEKNPSMEPSASTPF) has biased composition (polar residues). The 102-residue stretch at 101 to 202 (SFRHILPGFR…WMENLRRAVH (102 aa)) folds into the PH domain. Residues 193–311 (WMENLRRAVH…AGRQFVEKWY (119 aa)) form the C2 domain. Residues 387-595 (GKVKDFLTDL…TNMQRFLLEI (209 aa)) enclose the Ras-GAP domain. The segment at 646–943 (LRDVHTALST…RTPPTLLSTL (298 aa)) is necessary for interaction with AKT1. The span at 653 to 668 (LSTPGSGQLPGTNDLA) shows a compositional bias: polar residues. Disordered stretches follow at residues 653 to 679 (LSTPGSGQLPGTNDLASTPGSGSSSVS) and 715 to 738 (RSSGVQPSPARSSSYSEANEPDLQ). A compositionally biased stretch (low complexity) spans 669–679 (STPGSGSSSVS). Positions 715–731 (RSSGVQPSPARSSSYSE) are enriched in polar residues. Serine 728 bears the Phosphoserine; by MAP3K5 and RIPK1 mark. Serine 747 bears the Phosphoserine mark. Disordered regions lie at residues 804-823 (VPTPTTPGTSEGAPGRPQLL), 843-865 (PRGLGDSGSEGHSSLSSHSNSEE), 895-998 (SLTE…SPNA), 1015-1034 (EDEGLGPDPPHRDRLRSKEE), and 1163-1189 (ARNGVSPTNPTKLQITENGEFRNSSNC). Residues 852–865 (EGHSSLSSHSNSEE) show a composition bias toward low complexity. Pro residues predominate over residues 919–931 (QPPPPPPPPPPAP). Composition is skewed to polar residues over residues 939–955 (LLSTLQYPRPSSGTLAS) and 967–976 (LRQQSSSSKG). Phosphoserine occurs at positions 978 and 995. Residues 1023–1034 (PPHRDRLRSKEE) are compositionally biased toward basic and acidic residues. Residues 1025–1159 (HRDRLRSKEE…SALTQLKERY (135 aa)) adopt a coiled-coil conformation.

On plasma membrane, exists in an inactive form complexed with TNFR1; in response to TNF-alpha, dissociates from TNFR1 complex, translocates to cytoplasm and forms part of an intracellular signaling complex comprising TRADD, RIPK1, TRAF2 and MAP3K5. Interacts with DAB1. Part of a cytoplasmic complex made of HIPK1, DAB2IP and MAP3K5 in response to TNF-alpha; this complex formation promotes MAP3K5-JNK activation and subsequent apoptosis. Interacts (via N-terminal domain) with JAK2; the interaction occurs in a IFNG/IFN-gamma-dependent manner and inhibits JAK2 autophosphorylation activity. Interacts (via C2 domain) with GSK3B; the interaction stimulates GSK3B kinase activation. Interacts (via C2 domain) with PPP2CA. Interacts (via proline-rich motif) with a regulatory p85 subunit (via SH3 domain) of the PI3K complex; the interaction inhibits the PI3K-AKT complex activity in a TNF-alpha-dependent manner in prostate cancer (PCa) cells. Interacts with AKT1; the interaction is increased in a TNF-alpha-induced manner. Interacts (via C2 domain and active form preferentially) with KDR/VEGFR2 (tyrosine-phosphorylated active form preferentially); the interaction occurs at the late phase of VEGFA response and inhibits KDR/VEGFR2 activity. Interacts (via N-terminus C2 domain) with MAP3K5 ('Ser-966' dephosphorylated form preferentially); the interaction occurs in a TNF-alpha-induced manner. Interacts (via Ras-GAP domain) with the catalytic subunit of protein phosphatase PP2A; the interaction occurs in resting endothelial cells, is further enhanced by TNF-alpha stimulation and is required to bridge PP2A to MAP3K5. Interacts (via C-terminus PER domain) with TRAF2 (via zinc fingers); the interaction occurs in a TNF-alpha-dependent manner. Interacts with 14-3-3 proteins; the interaction occurs in a TNF-alpha-dependent manner. Interacts (via Ras-GAP domain) with RIPK1 (via kinase domain); the interaction occurs in a TNF-alpha-dependent manner. Interacts (via PH domain) with ERN1. Interacts with TRAF2. Interacts (via NPXY motif) with DAB2 (via PID domain). Interacts with RAB40C; acts as a GAP for RAB40C. Post-translationally, in response to TNF-alpha-induction, phosphorylated at Ser-728; phosphorylation leads to a conformational change, and thus, increases its association with 14-3-3 proteins, MAP3K5, RIPK1 and TRAF2 in endothelial cells; also stimulates regulatory p85 subunit sequestring and PI3K-p85 complex activity inhibition. As to expression, expressed in vascular endothelium of muscle and aorta, in smooth muscle cells of aorta and epithelial cells of lung. Expressed throughout the brain, including olfactory bulb, hypothalamus, cerebellum and cerebral cortex. Expressed in the soma and processes of neurons in a variety of brain structures, including the developing cerebral cortex, CA1 pyramidal neurons and Purkinje cells. Poorly expressed in medulloblastoma cells compared to cerebellar precursor proliferating progenitor cells (at protein level). Highly expressed in the brain, salivary gland, and testis; moderate expression in kidney and heart. Low expression in the lung, seminal vesicle, ventral prostate, epididymis, liver, and bladder. Very low expression in the coagulation gland and skeleton muscles. Lowest expression seen in spleen.

Its subcellular location is the cytoplasm. The protein resides in the cell membrane. It localises to the membrane. It is found in the cell projection. The protein localises to the dendrite. Functions as a scaffold protein implicated in the regulation of a large spectrum of both general and specialized signaling pathways. Involved in several processes such as innate immune response, inflammation and cell growth inhibition, apoptosis, cell survival, angiogenesis, cell migration and maturation. Also plays a role in cell cycle checkpoint control; reduces G1 phase cyclin levels resulting in G0/G1 cell cycle arrest. Mediates signal transduction by receptor-mediated inflammatory signals, such as the tumor necrosis factor (TNF), interferon (IFN) or lipopolysaccharide (LPS). Modulates the balance between phosphatidylinositol 3-kinase (PI3K)-AKT-mediated cell survival and apoptosis stimulated kinase (MAP3K5)-JNK signaling pathways; sequesters both AKT1 and MAP3K5 and counterbalances the activity of each kinase by modulating their phosphorylation status in response to pro-inflammatory stimuli. Acts as a regulator of the endoplasmic reticulum (ER) unfolded protein response (UPR) pathway; specifically involved in transduction of the ER stress-response to the JNK cascade through ERN1. Mediates TNF-alpha-induced apoptosis activation by facilitating dissociation of inhibitor 14-3-3 from MAP3K5; recruits the PP2A phosphatase complex which dephosphorylates MAP3K5 on 'Ser-966', leading to the dissociation of 13-3-3 proteins and activation of the MAP3K5-JNK signaling pathway in endothelial cells. Also mediates TNF/TRAF2-induced MAP3K5-JNK activation, while it inhibits CHUK-NF-kappa-B signaling. Acts a negative regulator in the IFN-gamma-mediated JAK-STAT signaling cascade by inhibiting smooth muscle cell (VSMCs) proliferation and intimal expansion, and thus, prevents graft arteriosclerosis (GA). Acts as a GTPase-activating protein (GAP) for the ADP ribosylation factor 6 (ARF6) and Ras. Promotes hydrolysis of the ARF6-bound GTP and thus, negatively regulates phosphatidylinositol 4,5-bisphosphate (PIP2)-dependent TLR4-TIRAP-MyD88 and NF-kappa-B signaling pathways in endothelial cells in response to lipopolysaccharides (LPS). Binds specifically to phosphatidylinositol 4-phosphate (PtdIns4P) and phosphatidylinositol 3-phosphate (PtdIns3P). In response to vascular endothelial growth factor (VEGFA), acts as a negative regulator of the VEGFR2-PI3K-mediated angiogenic signaling pathway by inhibiting endothelial cell migration and tube formation. In the developing brain, promotes both the transition from the multipolar to the bipolar stage and the radial migration of cortical neurons from the ventricular zone toward the superficial layer of the neocortex in a glial-dependent locomotion process. Probable downstream effector of the Reelin signaling pathway; promotes Purkinje cell (PC) dendrites development and formation of cerebellar synapses. Also functions as a tumor suppressor protein in prostate cancer progression; prevents cell proliferation and epithelial-to-mesenchymal transition (EMT) through activation of the glycogen synthase kinase-3 beta (GSK3B)-induced beta-catenin and inhibition of PI3K-AKT and Ras-MAPK survival downstream signaling cascades, respectively. This is Disabled homolog 2-interacting protein (Dab2ip) from Mus musculus (Mouse).